The chain runs to 606 residues: Kelch-like protein 41 (606 aa).

Ser-3 is subject to Phosphoserine. Residues 33-100 (IDCTLKAGDK…LYSASIDLND (68 aa)) enclose the BTB domain. Residues 135–237 (CLAILRLGLL…AEKYFKDHVE (103 aa)) form the BACK domain. 5 Kelch repeats span residues 346-398 (QVYV…EVDD), 399-447 (KIYV…SHNG), 448-495 (MIYC…IHKG), 497-542 (IVIA…SLAG), and 544-599 (LYAI…TRLN).

Interacts with NRAP. Part of a complex that contains CUL3, RBX1 and KLHL41. Interacts with LASP1. Post-translationally, ubiquitinated by E3 ubiquitin ligase complex formed by CUL3 and RBX1 and probably targeted for proteasome-independent degradation. Quinone-induced oxidative stress increases its ubiquitination. In terms of tissue distribution, skeletal muscle. Localized between laterally fusing myofibrils in skeletal muscle (at protein level). Expressed at a lower level in the heart compared to skeletal muscle.

It is found in the cytoplasm. The protein localises to the cytoskeleton. It localises to the cell projection. The protein resides in the pseudopodium. Its subcellular location is the ruffle. It is found in the myofibril. The protein localises to the sarcomere. It localises to the m line. The protein resides in the sarcoplasmic reticulum membrane. Its subcellular location is the endoplasmic reticulum membrane. Functionally, involved in skeletal muscle development and differentiation. Regulates proliferation and differentiation of myoblasts and plays a role in myofibril assembly by promoting lateral fusion of adjacent thin fibrils into mature, wide myofibrils. Required for pseudopod elongation in transformed cells. In Mus musculus (Mouse), this protein is Kelch-like protein 41 (Klhl41).